Here is a 157-residue protein sequence, read N- to C-terminus: NADPH-dependent 7-cyano-7-deazaguanine reductase (157 aa).

C56 acts as the Thioimide intermediate in catalysis. D63 functions as the Proton donor in the catalytic mechanism. Substrate is bound by residues 78 to 80 (VES) and 97 to 98 (HE).

The protein belongs to the GTP cyclohydrolase I family. QueF type 1 subfamily.

It is found in the cytoplasm. It carries out the reaction 7-aminomethyl-7-carbaguanine + 2 NADP(+) = 7-cyano-7-deazaguanine + 2 NADPH + 3 H(+). Its pathway is tRNA modification; tRNA-queuosine biosynthesis. Catalyzes the NADPH-dependent reduction of 7-cyano-7-deazaguanine (preQ0) to 7-aminomethyl-7-deazaguanine (preQ1). The chain is NADPH-dependent 7-cyano-7-deazaguanine reductase from Parabacteroides distasonis (strain ATCC 8503 / DSM 20701 / CIP 104284 / JCM 5825 / NCTC 11152).